The following is a 386-amino-acid chain: Succinate--CoA ligase [ADP-forming] subunit beta (386 aa).

The region spanning 9-244 (KEILRKYGVP…HDEEDPLETR (236 aa)) is the ATP-grasp domain. Residues K46, 53 to 55 (GRG), E99, C102, and E107 contribute to the ATP site. Positions 199 and 213 each coordinate Mg(2+). Substrate-binding positions include N264 and 321-323 (GIM).

It belongs to the succinate/malate CoA ligase beta subunit family. As to quaternary structure, heterotetramer of two alpha and two beta subunits. Requires Mg(2+) as cofactor.

The catalysed reaction is succinate + ATP + CoA = succinyl-CoA + ADP + phosphate. The enzyme catalyses GTP + succinate + CoA = succinyl-CoA + GDP + phosphate. Its pathway is carbohydrate metabolism; tricarboxylic acid cycle; succinate from succinyl-CoA (ligase route): step 1/1. In terms of biological role, succinyl-CoA synthetase functions in the citric acid cycle (TCA), coupling the hydrolysis of succinyl-CoA to the synthesis of either ATP or GTP and thus represents the only step of substrate-level phosphorylation in the TCA. The beta subunit provides nucleotide specificity of the enzyme and binds the substrate succinate, while the binding sites for coenzyme A and phosphate are found in the alpha subunit. The chain is Succinate--CoA ligase [ADP-forming] subunit beta from Rickettsia massiliae (strain Mtu5).